Consider the following 149-residue polypeptide: Calmodulin (149 aa).

The residue at position 2 (Ala-2) is an N-acetylalanine. EF-hand domains are found at residues 8-43 (DQIS…LGQN), 44-79 (PTEA…KMKD), 81-116 (DSEE…LGEK), and 117-149 (LTDE…MMAK). Residues Asp-21, Asp-23, Asp-25, Cys-27, Glu-32, Asp-57, Asp-59, Asn-61, Thr-63, Glu-68, Asp-94, Asp-96, Asn-98, and Glu-105 each coordinate Ca(2+). Lys-116 carries the post-translational modification N6,N6,N6-trimethyllysine. Positions 130, 132, 134, 136, and 141 each coordinate Ca(2+).

The protein belongs to the calmodulin family.

Its function is as follows. Calmodulin mediates the control of a large number of enzymes, ion channels and other proteins by Ca(2+). Among the enzymes to be stimulated by the calmodulin-Ca(2+) complex are a number of protein kinases and phosphatases. This chain is Calmodulin (CAM), found in Malus domestica (Apple).